Consider the following 267-residue polypeptide: RWD domain-containing protein 3 (267 aa).

Residues 7–114 (QELSALAAIF…LWIQQNLRLV (108 aa)) form the RWD domain. 2 interaction with UBE2I/UBC9 regions span residues 13–15 (AAI) and 100–102 (VHE).

In terms of assembly, interacts with UBE2I/UBC9, NFKBIA, HIF1A and NCOA2.

The protein localises to the nucleus. The protein resides in the cytoplasm. Enhancer of SUMO conjugation. Via its interaction with UBE2I/UBC9, increases SUMO conjugation to proteins by promoting the binding of E1 and E2 enzymes, thioester linkage between SUMO and UBE2I/UBC9 and transfer of SUMO to specific target proteins which include HIF1A, PIAS, NFKBIA, NR3C1 and TOP1. Positively regulates the NF-kappa-B signaling pathway by enhancing the sumoylation of NF-kappa-B inhibitor alpha (NFKBIA), promoting its stabilization which consequently leads to an increased inhibition of NF-kappa-B transcriptional activity. Negatively regulates the hypoxia-inducible factor-1 alpha (HIF1A) signaling pathway by increasing the sumoylation of HIF1A, promoting its stabilization, transcriptional activity and the expression of its target gene VEGFA during hypoxia. Has no effect on ubiquitination. This chain is RWD domain-containing protein 3 (Rwdd3), found in Mus musculus (Mouse).